Here is a 236-residue protein sequence, read N- to C-terminus: Phosphoribosylaminoimidazole-succinocarboxamide synthase (236 aa).

It belongs to the SAICAR synthetase family.

It carries out the reaction 5-amino-1-(5-phospho-D-ribosyl)imidazole-4-carboxylate + L-aspartate + ATP = (2S)-2-[5-amino-1-(5-phospho-beta-D-ribosyl)imidazole-4-carboxamido]succinate + ADP + phosphate + 2 H(+). The protein operates within purine metabolism; IMP biosynthesis via de novo pathway; 5-amino-1-(5-phospho-D-ribosyl)imidazole-4-carboxamide from 5-amino-1-(5-phospho-D-ribosyl)imidazole-4-carboxylate: step 1/2. The chain is Phosphoribosylaminoimidazole-succinocarboxamide synthase from Chlorobium phaeobacteroides (strain DSM 266 / SMG 266 / 2430).